Consider the following 842-residue polypeptide: Protein translocase subunit SecA (842 aa).

Residues Gln85, 103 to 107 (GEGKT), and Asp493 contribute to the ATP site. Zn(2+) contacts are provided by Cys825, Cys827, Cys836, and His837.

The protein belongs to the SecA family. In terms of assembly, monomer and homodimer. Part of the essential Sec protein translocation apparatus which comprises SecA, SecYEG and auxiliary proteins SecDF. Other proteins may also be involved. It depends on Zn(2+) as a cofactor.

It is found in the cell membrane. Its subcellular location is the cytoplasm. It catalyses the reaction ATP + H2O + cellular proteinSide 1 = ADP + phosphate + cellular proteinSide 2.. Part of the Sec protein translocase complex. Interacts with the SecYEG preprotein conducting channel. Has a central role in coupling the hydrolysis of ATP to the transfer of proteins into and across the cell membrane, serving as an ATP-driven molecular motor driving the stepwise translocation of polypeptide chains across the membrane. The protein is Protein translocase subunit SecA of Streptococcus equi subsp. equi (strain 4047).